The chain runs to 138 residues: ATP synthase epsilon chain, chloroplastic (138 aa).

It belongs to the ATPase epsilon chain family. In terms of assembly, F-type ATPases have 2 components, CF(1) - the catalytic core - and CF(0) - the membrane proton channel. CF(1) has five subunits: alpha(3), beta(3), gamma(1), delta(1), epsilon(1). CF(0) has three main subunits: a, b and c.

It is found in the plastid. The protein resides in the chloroplast thylakoid membrane. Functionally, produces ATP from ADP in the presence of a proton gradient across the membrane. The sequence is that of ATP synthase epsilon chain, chloroplastic from Staurastrum punctulatum (Green alga).